Here is a 439-residue protein sequence, read N- to C-terminus: Ribulose bisphosphate carboxylase/oxygenase activase 2, chloroplastic (439 aa).

A chloroplast-targeting transit peptide spans 1 to 58 (MATSVSTIGAANKAPLSLNNSVAGTSVPSTAFFGKTLKKVYGKGVSSPKVTNRSLRIA). ATP is bound at residue 169–176 (GGKGQGKS).

It belongs to the RuBisCO activase family.

The protein localises to the plastid. It localises to the chloroplast stroma. In terms of biological role, activation of RuBisCO (ribulose-1,5-bisphosphate carboxylase/oxygenase; EC 4.1.1.39) involves the ATP-dependent carboxylation of the epsilon-amino group of lysine leading to a carbamate structure. This Nicotiana tabacum (Common tobacco) protein is Ribulose bisphosphate carboxylase/oxygenase activase 2, chloroplastic (RCA).